The sequence spans 208 residues: MARYRGPVEKIERRFGVSLNLKGERRLAGKSALEKRPYAPGQHGQRRKKVSEYGLQLNEKQKAKFMYGVSEKQFRALFVEAKRREGNTGTNLVTLIEQRLDNVVYRMGFATTRRFARQLVTHGHLLVDGAKLDIPSYRVRPGQKIEIRESSKNNSQIVRALELTNQTGLAPWVDIDADKKFGIFTRLPEREEVVIPVEERLIVELYSK.

Residues 98-160 enclose the S4 RNA-binding domain; that stretch reads QRLDNVVYRM…SKNNSQIVRA (63 aa).

The protein belongs to the universal ribosomal protein uS4 family. In terms of assembly, part of the 30S ribosomal subunit. Contacts protein S5. The interaction surface between S4 and S5 is involved in control of translational fidelity.

In terms of biological role, one of the primary rRNA binding proteins, it binds directly to 16S rRNA where it nucleates assembly of the body of the 30S subunit. With S5 and S12 plays an important role in translational accuracy. This is Small ribosomal subunit protein uS4 from Sulfurimonas denitrificans (strain ATCC 33889 / DSM 1251) (Thiomicrospira denitrificans (strain ATCC 33889 / DSM 1251)).